The following is a 258-amino-acid chain: uncharacterized protein (258 aa).

The N-terminal stretch at M1–S19 is a signal peptide. A run of 3 helical transmembrane segments spans residues G94–G114, C197–I217, and P219–V239.

It localises to the membrane. This is an uncharacterized protein from Homo sapiens (Human).